A 227-amino-acid chain; its full sequence is Urease accessory protein UreE (227 aa).

Residues 192 to 227 (PHGSGLHVHAIHSHGHSHSHDHDHDHNHDHDHKHKQ) are disordered. Positions 209–221 (HSHDHDHDHNHDH) are enriched in basic and acidic residues.

This sequence belongs to the UreE family.

It localises to the cytoplasm. In terms of biological role, involved in urease metallocenter assembly. Binds nickel. Probably functions as a nickel donor during metallocenter assembly. The protein is Urease accessory protein UreE of Yersinia bercovieri.